Reading from the N-terminus, the 82-residue chain is MVTIRLTRGGAKKRPFYQIVVADSRSPRDGRFIERIGFFNPLAAGQAERLRLDVAKVDAWVAKGADLSDRVASLVKEARKAA.

It belongs to the bacterial ribosomal protein bS16 family.

In Actinobacillus pleuropneumoniae serotype 5b (strain L20), this protein is Small ribosomal subunit protein bS16.